Reading from the N-terminus, the 94-residue chain is Small ribosomal subunit protein uS19 (94 aa).

This sequence belongs to the universal ribosomal protein uS19 family.

Protein S19 forms a complex with S13 that binds strongly to the 16S ribosomal RNA. This Desulforamulus reducens (strain ATCC BAA-1160 / DSM 100696 / MI-1) (Desulfotomaculum reducens) protein is Small ribosomal subunit protein uS19.